We begin with the raw amino-acid sequence, 859 residues long: MSLGGIVDAILGKDDRPKVKGRVILMKKNVLDFINIGASVVDGISDLLGQKVSIQLISGSVNYDGLEGKLSNPAYLESWLTDITPITAGESTFSVTFDWDRDEFGVPGAFIIKNLHLNEFFLKSLTLEDVPNYGKIHFVCNSWVYPAFRYKSDRIFFANQAYLPSETPQPLRKYRENELVALRGDGTGKLEEWDRVYDYACYNDLGEPDKGEEYARPILGGSSEYPYPRRGRTGREPTKADPNCESRNPLPMSLDIYVPRDERFGHVKKSDFLTSSLKSSLQTLLPAFKALCDNTPNEFNSFADVLNLYEGGIKLPEGPWLKAITDNISSEILKDILQTDGQGLLKYPTPQVIQGDKTAWRTDEEFGREMLAGSNPVLISRLQEFPPKSKLDPTIYGNQNSTITTEHVQDKLNGLTVNEAIKSNRLFILNHHDIVMPLLRKINMSANTKAYASRTLLFLQDDRTLKPLAIELSLPHPDGDQFGTVSKVYTPADQGVEGSIWQFAKAYVAVNDMGIHQLISHWLNTHAVIEPFVVATNRHLSVLHPIHKLLHPHFRNTMNINALARETLTYDGGFETSLFPAKYSMEMSAAAYKDWVFPEQALPADLLKRGVAVEDLSSPHGIRLLILDYPYAVDGLEIWAAIKSWVTEYCKFYYKSDETVEKDTELQAWWKELREEGHGDKKDEAWWPKLQTRQELRDCCTIIIWIASALHAALHFGLYSYAGYLPNRPTLSCNLMPEPGSVEYEELKTNPDKVFLKTFVPQLQSLLEISIFEVSSRHASDEVYLGQRDSIEWTKDKEPLVAFERFGKMLSDIENRIMIMNSHKSWKNRSGPVNVPYTLLFPTSEEGLTGKGIPNSVSI.

In terms of domain architecture, PLAT spans 34–158 (INIGASVVDG…RYKSDRIFFA (125 aa)). Positions 161-859 (AYLPSETPQP…GKGIPNSVSI (699 aa)) constitute a Lipoxygenase domain. Residues 213–246 (EYARPILGGSSEYPYPRRGRTGREPTKADPNCES) form a disordered region. A compositionally biased stretch (basic and acidic residues) spans 233–244 (TGREPTKADPNC). Fe cation contacts are provided by His-521, His-526, His-711, and Ile-859.

This sequence belongs to the lipoxygenase family. As to quaternary structure, monomer. Requires Fe cation as cofactor. As to expression, fruit specific.

The protein resides in the cytoplasm. It carries out the reaction (9Z,12Z)-octadecadienoate + O2 = (9S)-hydroperoxy-(10E,12Z)-octadecadienoate. It participates in lipid metabolism; oxylipin biosynthesis. In terms of biological role, plant lipoxygenase may be involved in a number of diverse aspects of plant physiology including growth and development, pest resistance, and senescence or responses to wounding. It catalyzes the hydroperoxidation of lipids containing a cis,cis-1,4-pentadiene structure. This chain is Linoleate 9S-lipoxygenase B (LOX1.2), found in Solanum lycopersicum (Tomato).